Consider the following 340-residue polypeptide: Glycerol-3-phosphate dehydrogenase [NAD(P)+] (340 aa).

Residues Ser-13, Trp-14, and Lys-108 each contribute to the NADPH site. Lys-108, Gly-139, and Ser-141 together coordinate sn-glycerol 3-phosphate. Ala-143 is an NADPH binding site. Sn-glycerol 3-phosphate is bound by residues Lys-194, Asp-247, Ser-257, Arg-258, and Asn-259. Residue Lys-194 is the Proton acceptor of the active site. Arg-258 is a binding site for NADPH. NADPH is bound by residues Val-282 and Glu-284.

It belongs to the NAD-dependent glycerol-3-phosphate dehydrogenase family.

It is found in the cytoplasm. It carries out the reaction sn-glycerol 3-phosphate + NAD(+) = dihydroxyacetone phosphate + NADH + H(+). The enzyme catalyses sn-glycerol 3-phosphate + NADP(+) = dihydroxyacetone phosphate + NADPH + H(+). The protein operates within membrane lipid metabolism; glycerophospholipid metabolism. Catalyzes the reduction of the glycolytic intermediate dihydroxyacetone phosphate (DHAP) to sn-glycerol 3-phosphate (G3P), the key precursor for phospholipid synthesis. The protein is Glycerol-3-phosphate dehydrogenase [NAD(P)+] of Streptococcus thermophilus (strain CNRZ 1066).